We begin with the raw amino-acid sequence, 194 residues long: MKVGVLALQGDVSEHIDAFTAALRKRGYTEDSPVIEVRNPEDLAGCAALAIPGGESTTISRLVDKNGLYKPIRDFKGGIFATCAGMILMATDVGDPRVHSLGLLDMTVDRNAFGRQRESFEADIRVQGLDGGSFHAVFIRGPVVTEARDGVVVLARTDKGIVAVEKGRHMALAFHPELGGDLRLHERFLKNLGV.

Residue 54 to 56 participates in L-glutamine binding; the sequence is GES. Catalysis depends on C83, which acts as the Nucleophile. L-glutamine is bound by residues R110 and 139 to 140; that span reads IR. Residues H175 and E177 each act as charge relay system in the active site.

The protein belongs to the glutaminase PdxT/SNO family. In the presence of PdxS, forms a dodecamer of heterodimers. Only shows activity in the heterodimer.

It carries out the reaction aldehydo-D-ribose 5-phosphate + D-glyceraldehyde 3-phosphate + L-glutamine = pyridoxal 5'-phosphate + L-glutamate + phosphate + 3 H2O + H(+). It catalyses the reaction L-glutamine + H2O = L-glutamate + NH4(+). It functions in the pathway cofactor biosynthesis; pyridoxal 5'-phosphate biosynthesis. Functionally, catalyzes the hydrolysis of glutamine to glutamate and ammonia as part of the biosynthesis of pyridoxal 5'-phosphate. The resulting ammonia molecule is channeled to the active site of PdxS. This Methanoregula boonei (strain DSM 21154 / JCM 14090 / 6A8) protein is Pyridoxal 5'-phosphate synthase subunit PdxT.